Consider the following 245-residue polypeptide: uncharacterized protein (245 aa).

The protein to M.tuberculosis Rv2927c.

This is an uncharacterized protein from Mycobacterium leprae (strain TN).